A 112-amino-acid chain; its full sequence is Putative pterin-4-alpha-carbinolamine dehydratase (112 aa).

Belongs to the pterin-4-alpha-carbinolamine dehydratase family.

It catalyses the reaction (4aS,6R)-4a-hydroxy-L-erythro-5,6,7,8-tetrahydrobiopterin = (6R)-L-erythro-6,7-dihydrobiopterin + H2O. This Vibrio parahaemolyticus serotype O3:K6 (strain RIMD 2210633) protein is Putative pterin-4-alpha-carbinolamine dehydratase.